The chain runs to 629 residues: Sushi domain-containing protein 5 (629 aa).

The first 35 residues, 1 to 35 (MTAEGPSPPARWHRRLPGLWAAALLLLGLPRLSVR), serve as a signal peptide directing secretion. The Extracellular portion of the chain corresponds to 36–574 (ADGKFFVLES…DGCPGLSRGP (539 aa)). The 96-residue stretch at 39 to 134 (KFFVLESQNG…GGTYSALCIK (96 aa)) folds into the Link domain. Disulfide bonds link Cys61/Cys132, Cys140/Cys184, and Cys167/Cys197. Residues 138–199 (KPCGDPPSFP…WYGLVQACGK (62 aa)) form the Sushi domain. Positions 225 to 249 (EDSRTEADEDRGQGDSSEEAPKQDR) are enriched in basic and acidic residues. Disordered stretches follow at residues 225–252 (EDSR…RLVS) and 344–403 (DGPS…GLDE). A helical membrane pass occupies residues 575–595 (VIATIVTVLCLLLLLAGVGMV). Topologically, residues 596-629 (WGYRKCQHKSSVYKLNVGQRQARHYHQQIEMEKV) are cytoplasmic.

It is found in the membrane. The protein is Sushi domain-containing protein 5 (SUSD5) of Homo sapiens (Human).